Reading from the N-terminus, the 343-residue chain is MLTNRQLLILQVIINDFIKSAQPVGSRTLSKKDEITFSSATIRNEMADLEELGFIEKTHSSSGRVPSEKGYRYYVDHLLSPVKLTKSDLDQIHSIFKEKIFELEKTVQKSAQILSDLTNYTSIVLGPKLSENYLKQIQIIPIQPDMAVAILVTNTGHVENKTINFPTKMDLSDIEKLVNILNDRLSGVPMDELNERIFKEVVMYLRQHIKNYDNILDALRSTFHSTNHVEKLFFGGKINMLNQPEFHDITRVRSLLSLIEKEQDVLKLVQSPHTGISIKIGKENDYEEMENCSLITASYSVDQKQIGSIAIIGPTRMNYSRVVSLLQHVTSDLSKALTSLYDE.

This sequence belongs to the HrcA family.

Negative regulator of class I heat shock genes (grpE-dnaK-dnaJ and groELS operons). Prevents heat-shock induction of these operons. This chain is Heat-inducible transcription repressor HrcA, found in Bacillus subtilis (strain 168).